The following is an 84-amino-acid chain: Carboxysome shell vertex protein CsoS4B (84 aa).

The BMV domain occupies 1 to 77; it reads MQILQVKKQL…TDLTVGGIID (77 aa).

The protein belongs to the CcmL/EutN family. CsoS4 subfamily. As to quaternary structure, homopentamer.

The protein localises to the carboxysome. Its function is as follows. Probably forms vertices in the carboxysome, a polyhedral inclusion where RuBisCO (ribulose bisphosphate carboxylase, cbbL-cbbS) is sequestered. Has been modeled to induce curvature upon insertion into an otherwise flat hexagonal layer of major carboxysome subunits. This is Carboxysome shell vertex protein CsoS4B from Hydrogenovibrio crunogenus (strain DSM 25203 / XCL-2) (Thiomicrospira crunogena).